A 204-amino-acid chain; its full sequence is Large ribosomal subunit protein eL15 (204 aa).

It belongs to the eukaryotic ribosomal protein eL15 family. Component of the large ribosomal subunit.

It is found in the cytoplasm. Functionally, component of the large ribosomal subunit. The ribosome is a large ribonucleoprotein complex responsible for the synthesis of proteins in the cell. In Mylopharyngodon piceus (Black carp), this protein is Large ribosomal subunit protein eL15 (rpl15).